Here is a 135-residue protein sequence, read N- to C-terminus: Transcription antitermination protein NusB (135 aa).

Belongs to the NusB family.

In terms of biological role, involved in transcription antitermination. Required for transcription of ribosomal RNA (rRNA) genes. Binds specifically to the boxA antiterminator sequence of the ribosomal RNA (rrn) operons. The sequence is that of Transcription antitermination protein NusB from Clostridium perfringens (strain ATCC 13124 / DSM 756 / JCM 1290 / NCIMB 6125 / NCTC 8237 / Type A).